The primary structure comprises 182 residues: Bifunctional protein PyrR (182 aa).

A PRPP-binding motif is present at residues 98-110; sequence VVLVDDVLFTGRS.

Belongs to the purine/pyrimidine phosphoribosyltransferase family. PyrR subfamily.

It carries out the reaction UMP + diphosphate = 5-phospho-alpha-D-ribose 1-diphosphate + uracil. Functionally, regulates the transcription of the pyrimidine nucleotide (pyr) operon in response to exogenous pyrimidines. Its function is as follows. Also displays a weak uracil phosphoribosyltransferase activity which is not physiologically significant. The protein is Bifunctional protein PyrR of Dehalococcoides mccartyi (strain ATCC BAA-2100 / JCM 16839 / KCTC 5957 / BAV1).